A 430-amino-acid chain; its full sequence is 3-phosphoshikimate 1-carboxyvinyltransferase (430 aa).

3-phosphoshikimate contacts are provided by K21, S22, and R26. K21 contacts phosphoenolpyruvate. Phosphoenolpyruvate is bound by residues G92 and R120. 3-phosphoshikimate-binding residues include S165, S166, Q167, S193, D314, and K341. A phosphoenolpyruvate-binding site is contributed by Q167. D314 (proton acceptor) is an active-site residue. Phosphoenolpyruvate-binding residues include R345, R386, and K411.

The protein belongs to the EPSP synthase family. In terms of assembly, monomer.

The protein resides in the cytoplasm. The enzyme catalyses 3-phosphoshikimate + phosphoenolpyruvate = 5-O-(1-carboxyvinyl)-3-phosphoshikimate + phosphate. Its pathway is metabolic intermediate biosynthesis; chorismate biosynthesis. Its function is as follows. Catalyzes the transfer of the enolpyruvyl moiety of phosphoenolpyruvate (PEP) to the 5-hydroxyl of shikimate-3-phosphate (S3P) to produce enolpyruvyl shikimate-3-phosphate and inorganic phosphate. In Methanospirillum hungatei JF-1 (strain ATCC 27890 / DSM 864 / NBRC 100397 / JF-1), this protein is 3-phosphoshikimate 1-carboxyvinyltransferase.